The sequence spans 179 residues: Phosphopantetheine adenylyltransferase (179 aa).

Serine 23 lines the substrate pocket. ATP contacts are provided by residues 23 to 24 (SF) and histidine 31. Substrate is bound by residues lysine 55, alanine 87, and arginine 101. Residues 102-104 (GIR), glutamate 112, and 137-143 (FAHVSSS) contribute to the ATP site.

The protein belongs to the bacterial CoaD family. Homohexamer. Mg(2+) serves as cofactor.

The protein localises to the cytoplasm. The enzyme catalyses (R)-4'-phosphopantetheine + ATP + H(+) = 3'-dephospho-CoA + diphosphate. It participates in cofactor biosynthesis; coenzyme A biosynthesis; CoA from (R)-pantothenate: step 4/5. Functionally, reversibly transfers an adenylyl group from ATP to 4'-phosphopantetheine, yielding dephospho-CoA (dPCoA) and pyrophosphate. This Rhodopirellula baltica (strain DSM 10527 / NCIMB 13988 / SH1) protein is Phosphopantetheine adenylyltransferase.